The primary structure comprises 187 residues: ATP synthase subunit delta (187 aa).

It belongs to the ATPase delta chain family. As to quaternary structure, F-type ATPases have 2 components, F(1) - the catalytic core - and F(0) - the membrane proton channel. F(1) has five subunits: alpha(3), beta(3), gamma(1), delta(1), epsilon(1). F(0) has three main subunits: a(1), b(2) and c(10-14). The alpha and beta chains form an alternating ring which encloses part of the gamma chain. F(1) is attached to F(0) by a central stalk formed by the gamma and epsilon chains, while a peripheral stalk is formed by the delta and b chains.

It localises to the cell membrane. In terms of biological role, f(1)F(0) ATP synthase produces ATP from ADP in the presence of a proton or sodium gradient. F-type ATPases consist of two structural domains, F(1) containing the extramembraneous catalytic core and F(0) containing the membrane proton channel, linked together by a central stalk and a peripheral stalk. During catalysis, ATP synthesis in the catalytic domain of F(1) is coupled via a rotary mechanism of the central stalk subunits to proton translocation. Functionally, this protein is part of the stalk that links CF(0) to CF(1). It either transmits conformational changes from CF(0) to CF(1) or is implicated in proton conduction. The chain is ATP synthase subunit delta from Mesomycoplasma hyopneumoniae (strain 232) (Mycoplasma hyopneumoniae).